The chain runs to 153 residues: 3-hydroxyacyl-[acyl-carrier-protein] dehydratase FabZ (153 aa).

Residue H57 is part of the active site.

It belongs to the thioester dehydratase family. FabZ subfamily.

Its subcellular location is the cytoplasm. The catalysed reaction is a (3R)-hydroxyacyl-[ACP] = a (2E)-enoyl-[ACP] + H2O. Functionally, involved in unsaturated fatty acids biosynthesis. Catalyzes the dehydration of short chain beta-hydroxyacyl-ACPs and long chain saturated and unsaturated beta-hydroxyacyl-ACPs. The protein is 3-hydroxyacyl-[acyl-carrier-protein] dehydratase FabZ of Aeromonas hydrophila subsp. hydrophila (strain ATCC 7966 / DSM 30187 / BCRC 13018 / CCUG 14551 / JCM 1027 / KCTC 2358 / NCIMB 9240 / NCTC 8049).